The sequence spans 80 residues: Peptide LaIT2 (80 aa).

The N-terminal stretch at 1–21 (MAKHLIVMFLVIMVISSLVDC) is a signal peptide. The BetaSPN-type CS-alpha/beta domain maps to 49–80 (QYGCPIISNMCEDHCRRKKMEGQCDLLDCVCS). Cystine bridges form between C52–C72, C59–C77, and C63–C79.

The protein belongs to the long chain scorpion toxin family. Class 2 subfamily. Expressed by the venom gland.

The protein resides in the secreted. Functionally, dual-function toxin that acts both as an insecticidal and an antimicrobial peptide. May inhibit voltage-gated potassium channels (Kv). This amphipathic peptide causes significant antimicrobial activity against E.coli (MIC=7 uM) but does not show any activity against S.aureus even at high concentration. In vivo, causes paralysis or death to crickets. In Liocheles australasiae (Dwarf wood scorpion), this protein is Peptide LaIT2.